The sequence spans 345 residues: MPPAAVMIDTTPDFDFSPAHAAAAASAKGDSGDRTLLLAPPSIASREDRLTSLFSVYDRSSTDLQMLDRLAAGLVSLPAKTYDLILVLTDPDGSRRSEVSPLLSNREIWGKVVPALKAGGTLRSEDGSLGQGNSIEEKEAILAGLVLGDDGYTKPDYAEQEVVPLRFGAKKVNADGSVPLSFGKKAAAAPAPAPAPAPVSKGPAGVGFIDFSDDLDLDAEDDDDVIDEDTLLTEADLKRPIQQPPECAPQPGKKRRACKDCTCGLAERIAAEDKARREKAEKGLATLKLKSEDLSELDFTVQGKTGSCNSCYLGDAFRCADCPYIGLPAFKPGEQVKILNNTAQI.

Positions 29 to 163 (GDSGDRTLLL…KPDYAEQEVV (135 aa)) are N-terminal SAM-like domain. Residues 164 to 237 (PLRFGAKKVN…EDTLLTEADL (74 aa)) are linker. The [2Fe-2S] cluster site is built by Cys-247, Cys-258, Cys-261, and Cys-263. The fe-S binding site A stretch occupies residues 247–263 (CAPQPGKKRRACKDCTC). Positions 308, 311, 319, and 322 each coordinate [4Fe-4S] cluster. Short sequence motifs (cx2C motif) lie at residues 308 to 311 (CNSC) and 319 to 322 (CADC). The interval 308-322 (CNSCYLGDAFRCADC) is fe-S binding site B.

This sequence belongs to the anamorsin family. In terms of assembly, monomer. Interacts with TAH18. Interacts with MIA40. Requires [2Fe-2S] cluster as cofactor. The cofactor is [4Fe-4S] cluster.

Its subcellular location is the cytoplasm. It is found in the mitochondrion intermembrane space. Its function is as follows. Component of the cytosolic iron-sulfur (Fe-S) protein assembly (CIA) machinery required for the maturation of extramitochondrial Fe-S proteins. Part of an electron transfer chain functioning in an early step of cytosolic Fe-S biogenesis, facilitating the de novo assembly of a [4Fe-4S] cluster on the scaffold complex CFD1-NBP35. Electrons are transferred to DRE2 from NADPH via the FAD- and FMN-containing protein TAH18. TAH18-DRE2 are also required for the assembly of the diferric tyrosyl radical cofactor of ribonucleotide reductase (RNR), probably by providing electrons for reduction during radical cofactor maturation in the catalytic small subunit RNR2. The sequence is that of Fe-S cluster assembly protein DRE2 from Podospora anserina (strain S / ATCC MYA-4624 / DSM 980 / FGSC 10383) (Pleurage anserina).